Consider the following 449-residue polypeptide: Signal recognition particle protein (449 aa).

GTP contacts are provided by residues 109 to 116 (GLQGSGKT), 191 to 195 (DTAGR), and 249 to 252 (SRID).

It belongs to the GTP-binding SRP family. SRP54 subfamily. In terms of assembly, part of the signal recognition particle protein translocation system, which is composed of SRP and FtsY. SRP is a ribonucleoprotein composed of Ffh and a 4.5S RNA molecule.

It localises to the cytoplasm. It carries out the reaction GTP + H2O = GDP + phosphate + H(+). In terms of biological role, involved in targeting and insertion of nascent membrane proteins into the cytoplasmic membrane. Binds to the hydrophobic signal sequence of the ribosome-nascent chain (RNC) as it emerges from the ribosomes. The SRP-RNC complex is then targeted to the cytoplasmic membrane where it interacts with the SRP receptor FtsY. Interaction with FtsY leads to the transfer of the RNC complex to the Sec translocase for insertion into the membrane, the hydrolysis of GTP by both Ffh and FtsY, and the dissociation of the SRP-FtsY complex into the individual components. This chain is Signal recognition particle protein, found in Rickettsia bellii (strain RML369-C).